Consider the following 545-residue polypeptide: Chaperonin GroEL (545 aa).

ATP is bound by residues 30–33 (TLGP), Lys51, 87–91 (DGTTT), Gly415, 479–481 (NAA), and Asp495. Residues 526–545 (KEDKPDLGNAGAGGNMGGMM) are disordered. Over residues 535–545 (AGAGGNMGGMM) the composition is skewed to gly residues.

This sequence belongs to the chaperonin (HSP60) family. In terms of assembly, forms a cylinder of 14 subunits composed of two heptameric rings stacked back-to-back. Interacts with the co-chaperonin GroES.

Its subcellular location is the cytoplasm. It carries out the reaction ATP + H2O + a folded polypeptide = ADP + phosphate + an unfolded polypeptide.. Together with its co-chaperonin GroES, plays an essential role in assisting protein folding. The GroEL-GroES system forms a nano-cage that allows encapsulation of the non-native substrate proteins and provides a physical environment optimized to promote and accelerate protein folding. The sequence is that of Chaperonin GroEL from Blochmanniella pennsylvanica (strain BPEN).